A 199-amino-acid polypeptide reads, in one-letter code: Thymidine kinase (199 aa).

ATP contacts are provided by residues Gly15–Ser22 and Asp88–Gln91. Glu89 serves as the catalytic Proton acceptor. Positions 145, 148, 183, and 186 each coordinate Zn(2+).

It belongs to the thymidine kinase family. Homotetramer.

The protein localises to the cytoplasm. It carries out the reaction thymidine + ATP = dTMP + ADP + H(+). This chain is Thymidine kinase, found in Staphylococcus aureus (strain Mu50 / ATCC 700699).